The following is a 316-amino-acid chain: Methionyl-tRNA formyltransferase (316 aa).

Residue 112 to 115 (SLLP) coordinates (6S)-5,6,7,8-tetrahydrofolate.

The protein belongs to the Fmt family.

The catalysed reaction is L-methionyl-tRNA(fMet) + (6R)-10-formyltetrahydrofolate = N-formyl-L-methionyl-tRNA(fMet) + (6S)-5,6,7,8-tetrahydrofolate + H(+). Functionally, attaches a formyl group to the free amino group of methionyl-tRNA(fMet). The formyl group appears to play a dual role in the initiator identity of N-formylmethionyl-tRNA by promoting its recognition by IF2 and preventing the misappropriation of this tRNA by the elongation apparatus. The polypeptide is Methionyl-tRNA formyltransferase (Trichlorobacter lovleyi (strain ATCC BAA-1151 / DSM 17278 / SZ) (Geobacter lovleyi)).